The primary structure comprises 501 residues: L-arabinose isomerase (501 aa).

Positions 306, 333, 350, and 449 each coordinate Mn(2+).

It belongs to the arabinose isomerase family. Requires Mn(2+) as cofactor.

It catalyses the reaction beta-L-arabinopyranose = L-ribulose. It participates in carbohydrate degradation; L-arabinose degradation via L-ribulose; D-xylulose 5-phosphate from L-arabinose (bacterial route): step 1/3. Catalyzes the conversion of L-arabinose to L-ribulose. In Herpetosiphon aurantiacus (strain ATCC 23779 / DSM 785 / 114-95), this protein is L-arabinose isomerase.